The chain runs to 376 residues: Growth/differentiation factor 8 (376 aa).

The N-terminal stretch at 1-24 (MIQKPQMYVYIYLFVLIAAGPVDL) is a signal peptide. A propeptide spanning residues 25–267 (NEDSEREANV…VTDTPKRSRR (243 aa)) is cleaved from the precursor. The N-linked (GlcNAc...) asparagine glycan is linked to N72. 4 disulfide bridges follow: C273-C283, C282-C341, C310-C373, and C314-C375.

Belongs to the TGF-beta family. Homodimer; disulfide-linked. Interacts with WFIKKN2, leading to inhibit its activity. Interacts with FSTL3. Post-translationally, synthesized as large precursor molecule that undergoes proteolytic cleavage to generate an N-terminal propeptide and a disulfide linked C-terminal dimer, which is the biologically active molecule. The circulating form consists of a latent complex of the C-terminal dimer and other proteins, including its propeptide, which maintain the C-terminal dimer in a latent, inactive state. Ligand activation requires additional cleavage of the prodomain by a tolloid-like metalloproteinase.

It is found in the secreted. Acts specifically as a negative regulator of skeletal muscle growth. The chain is Growth/differentiation factor 8 (Mstn) from Rattus norvegicus (Rat).